The primary structure comprises 113 residues: Putative pterin-4-alpha-carbinolamine dehydratase (113 aa).

The protein belongs to the pterin-4-alpha-carbinolamine dehydratase family.

The catalysed reaction is (4aS,6R)-4a-hydroxy-L-erythro-5,6,7,8-tetrahydrobiopterin = (6R)-L-erythro-6,7-dihydrobiopterin + H2O. The chain is Putative pterin-4-alpha-carbinolamine dehydratase from Legionella pneumophila (strain Paris).